The following is a 119-amino-acid chain: NADH-quinone oxidoreductase subunit A (119 aa).

The next 3 membrane-spanning stretches (helical) occupy residues 7-27 (YPVLLFLLVGTGLGIALVSIG), 63-83 (LVAILFIIFDLETAFLFPWGV), and 88-108 (IGWPGFIAMMIFLLEFLLGFA).

It belongs to the complex I subunit 3 family. In terms of assembly, NDH-1 is composed of 14 different subunits. Subunits NuoA, H, J, K, L, M, N constitute the membrane sector of the complex.

The protein localises to the cell inner membrane. The enzyme catalyses a quinone + NADH + 5 H(+)(in) = a quinol + NAD(+) + 4 H(+)(out). In terms of biological role, NDH-1 shuttles electrons from NADH, via FMN and iron-sulfur (Fe-S) centers, to quinones in the respiratory chain. The immediate electron acceptor for the enzyme in this species is believed to be ubiquinone. Couples the redox reaction to proton translocation (for every two electrons transferred, four hydrogen ions are translocated across the cytoplasmic membrane), and thus conserves the redox energy in a proton gradient. The chain is NADH-quinone oxidoreductase subunit A from Burkholderia mallei (strain NCTC 10247).